A 534-amino-acid chain; its full sequence is Alkaline serine exoprotease A (534 aa).

The signal sequence occupies residues 1–21 (MLKKLLSCCITSALCFHSSLA). A propeptide spanning residues 22–141 (FSQPNEIADS…LSLDPIVSAD (120 aa)) is cleaved from the precursor. An Inhibitor I9 domain is found at 57–134 (RYIVVFQQPQ…YIEQDRILSL (78 aa)). Positions 148–419 (IWGLDRIDQR…KLLYSLTDAD (272 aa)) constitute a Peptidase S8 domain. Active-site charge relay system residues include Asp-180, His-213, and Ser-363. The interval 423-442 (DCGGPDPTPDPEGKLTSGVP) is disordered.

It belongs to the peptidase S8 family.

This chain is Alkaline serine exoprotease A (proA), found in Vibrio alginolyticus.